The sequence spans 148 residues: Fluoride-specific ion channel FluC 2 (148 aa).

Helical transmembrane passes span 23-43, 61-81, 92-112, and 120-140; these read LGHL…RLAV, GTLA…TLIF, FWVL…LHTL, and LLGG…ALAG. Residues Gly-99 and Thr-102 each contribute to the Na(+) site.

Belongs to the fluoride channel Fluc/FEX (TC 1.A.43) family.

The protein localises to the cell membrane. It carries out the reaction fluoride(in) = fluoride(out). Na(+) is not transported, but it plays an essential structural role and its presence is essential for fluoride channel function. In terms of biological role, fluoride-specific ion channel. Important for reducing fluoride concentration in the cell, thus reducing its toxicity. This Rubrobacter xylanophilus (strain DSM 9941 / JCM 11954 / NBRC 16129 / PRD-1) protein is Fluoride-specific ion channel FluC 2.